The sequence spans 526 residues: Estrogen receptor beta (526 aa).

Positions 1–145 (MDIKNSPSNL…SPSSKRDAHF (145 aa)) are modulating. A phosphoserine; by MAPK mark is found at S84 and S102. NR C4-type zinc fingers lie at residues 146–166 (CAVC…CEGC) and 182–206 (CPAT…LRKC). The nuclear receptor DNA-binding region spans 146–211 (CAVCSDYASG…RLRKCYEVGM (66 aa)). Positions 261–494 (SPEQLVLTLL…DLLLEMLNAH (234 aa)) constitute an NR LBD domain. Positions 502–526 (LVTGSERSRMEESESKEGSQKPQAQ) are disordered. Over residues 507 to 520 (ERSRMEESESKEGS) the composition is skewed to basic and acidic residues.

This sequence belongs to the nuclear hormone receptor family. NR3 subfamily. As to quaternary structure, binds DNA as a homodimer. Can form a heterodimer with ESR1. Interacts with NCOA1, NCOA3, NCOA5 and NCOA6 coactivators, leading to a strong increase of transcription of target genes. Interacts with UBE1C and AKAP13. Interacts with DNTTIP2. Interacts with CCDC62 in the presence of estradiol/E2; this interaction seems to enhance the transcription of target genes. Interacts with DNAAF4. Interacts with PRMT2. Interacts with CCAR2 (via N-terminus) in a ligand-independent manner. Interacts with RBM39, in the presence of estradiol (E2). Interacts with STUB1/CHIP. Phosphorylation at Ser-84 and Ser-102 recruits NCOA1.

It is found in the nucleus. Nuclear hormone receptor. Binds estrogens with an affinity similar to that of ESR1/ER-alpha, and activates expression of reporter genes containing estrogen response elements (ERE) in an estrogen-dependent manner. This chain is Estrogen receptor beta (ESR2), found in Sus scrofa (Pig).